We begin with the raw amino-acid sequence, 87 residues long: Mitotic-spindle organizing protein 1 (87 aa).

Belongs to the MOZART1 family. As to quaternary structure, part of the gamma-tubulin complex.

It is found in the cytoplasm. It localises to the cytoskeleton. The protein localises to the microtubule organizing center. The protein resides in the spindle pole body. In terms of biological role, required for gamma-tubulin complex recruitment to the microtubule organizing center (MTOC). The sequence is that of Mitotic-spindle organizing protein 1 from Chaetomium globosum (strain ATCC 6205 / CBS 148.51 / DSM 1962 / NBRC 6347 / NRRL 1970) (Soil fungus).